The primary structure comprises 448 residues: Multiple inositol polyphosphate phosphatase 1 (448 aa).

Residues 1-19 (MAPRRAACLLPLLVAVASA) form the signal peptide. The active site involves His69. N-linked (GlcNAc...) asparagine glycans are attached at residues Asn203, Asn257, Asn409, and Asn441. A Prevents secretion from ER motif is present at residues 445 to 448 (ADEL).

It belongs to the histidine acid phosphatase family. MINPP1 subfamily. In terms of processing, N-glycosylated. In terms of tissue distribution, present in growth plate chondrocytes but not detectable in articular chondrocytes (at protein level). Spatially restricted to chondrocytes in the lower portion of the proliferative zone and the upper portion of the hypertrophic zone in the growth plate of long bones (at protein level). Weakly expressed in kidney, liver, lung, skin and spleen, and not detected in brain, heart and muscle.

It is found in the endoplasmic reticulum lumen. It localises to the secreted. The protein resides in the cell membrane. It catalyses the reaction 1D-myo-inositol hexakisphosphate + H2O = 1D-myo-inositol 1,2,4,5,6-pentakisphosphate + phosphate. It carries out the reaction 1D-myo-inositol 1,2,4,5,6-pentakisphosphate + H2O = 1D-myo-inositol 1,2,5,6-tetrakisphosphate + phosphate. The enzyme catalyses 1D-myo-inositol 1,2,5,6-tetrakisphosphate + H2O = 1D-myo-inositol 1,2,6-trisphosphate + phosphate. The catalysed reaction is 1D-myo-inositol 1,2,6-trisphosphate + H2O = 1D-myo-inositol 1,2-bisphosphate + phosphate. It catalyses the reaction 1D-myo-inositol 1,2-bisphosphate + H2O = 1D-myo-inositol 2-phosphate + phosphate. It carries out the reaction 1D-myo-inositol hexakisphosphate + H2O = 1D-myo-inositol 1,2,3,5,6-pentakisphosphate + phosphate. The enzyme catalyses 1D-myo-inositol 1,2,3,5,6-pentakisphosphate + H2O = 1D-myo-inositol 1,2,3,6-tetrakisphosphate + phosphate. The catalysed reaction is 1D-myo-inositol 1,2,3,6-tetrakisphosphate + H2O = 1D-myo-inositol 1,2,3-trisphosphate + phosphate. It catalyses the reaction 1D-myo-inositol 1,2,3-trisphosphate + H2O = 1D-myo-inositol 2,3-bisphosphate + phosphate. It carries out the reaction 1D-myo-inositol 2,3-bisphosphate + H2O = 1D-myo-inositol 2-phosphate + phosphate. The enzyme catalyses 1D-myo-inositol 1,3,4,5,6-pentakisphosphate + H2O = 1D-myo-inositol 1,4,5,6-tetrakisphosphate + phosphate. The catalysed reaction is 1D-myo-inositol 1,4,5,6-tetrakisphosphate + H2O = 1D-myo-inositol 1,4,5-trisphosphate + phosphate. It catalyses the reaction (2R)-2,3-bisphosphoglycerate + H2O = (2R)-2-phosphoglycerate + phosphate. In terms of biological role, multiple inositol polyphosphate phosphatase that hydrolyzes 1D-myo-inositol 1,3,4,5,6-pentakisphosphate (InsP5[2OH]) and 1D-myo-inositol hexakisphosphate (InsP6) to a range of less phosphorylated inositol phosphates. This regulates the availability of these various small molecule second messengers and metal chelators which control many aspects of cell physiology. Has a weak in vitro activity towards 1D-myo-inositol 1,4,5-trisphosphate which is unlikely to be physiologically relevant. By regulating intracellular inositol polyphosphates pools, which act as metal chelators, it may control the availability of intracellular calcium and iron, which are important for proper neuronal development and homeostasis. May have a dual substrate specificity, and function as a 2,3-bisphosphoglycerate 3-phosphatase hydrolyzing 2,3-bisphosphoglycerate to 2-phosphoglycerate. 2,3-bisphosphoglycerate (BPG) is formed as part of the Rapoport-Luebering glycolytic bypass and is a regulator of systemic oxygen homeostasis as the major allosteric effector of hemoglobin. The protein is Multiple inositol polyphosphate phosphatase 1 (MINPP1) of Gallus gallus (Chicken).